The primary structure comprises 399 residues: Flavohemoprotein (399 aa).

The region spanning 1-138 is the Globin domain; it reads MLDNKTIEII…IADAFIGIEK (138 aa). Residue His85 coordinates heme b. Residues Tyr95 and Glu137 each act as charge relay system in the active site. The interval 149–399 is reductase; that stretch reads GGWKEYKPFV…GPQLSLAQSV (251 aa). The 104-residue stretch at 152–255 folds into the FAD-binding FR-type domain; that stretch reads KEYKPFVIAK…SAPAGDFVLD (104 aa). FAD contacts are provided by residues Tyr190 and 206 to 209; that span reads RQYS. 268–273 is a binding site for NADP(+); that stretch reads GVGITP. Position 388 to 391 (388 to 391) interacts with FAD; it reads LFGP.

It belongs to the globin family. Two-domain flavohemoproteins subfamily. In the C-terminal section; belongs to the flavoprotein pyridine nucleotide cytochrome reductase family. Heme b serves as cofactor. It depends on FAD as a cofactor.

It catalyses the reaction 2 nitric oxide + NADPH + 2 O2 = 2 nitrate + NADP(+) + H(+). It carries out the reaction 2 nitric oxide + NADH + 2 O2 = 2 nitrate + NAD(+) + H(+). Its function is as follows. Is involved in NO detoxification in an aerobic process, termed nitric oxide dioxygenase (NOD) reaction that utilizes O(2) and NAD(P)H to convert NO to nitrate, which protects the bacterium from various noxious nitrogen compounds. Therefore, plays a central role in the inducible response to nitrosative stress. This chain is Flavohemoprotein (hmp), found in Bacillus subtilis (strain 168).